A 475-amino-acid chain; its full sequence is Ribulose bisphosphate carboxylase large chain (475 aa).

The propeptide occupies 1 to 2 (MS). N-acetylproline is present on Pro-3. At Lys-14 the chain carries N6,N6,N6-trimethyllysine. Asn-123 and Thr-173 together coordinate substrate. Residue Lys-175 is the Proton acceptor of the active site. Residue Lys-177 participates in substrate binding. Lys-201, Asp-203, and Glu-204 together coordinate Mg(2+). The residue at position 201 (Lys-201) is an N6-carboxylysine. Residue His-294 is the Proton acceptor of the active site. Substrate contacts are provided by Arg-295, His-327, and Ser-379.

It belongs to the RuBisCO large chain family. Type I subfamily. In terms of assembly, heterohexadecamer of 8 large chains and 8 small chains; disulfide-linked. The disulfide link is formed within the large subunit homodimers. Mg(2+) is required as a cofactor. Post-translationally, the disulfide bond which can form in the large chain dimeric partners within the hexadecamer appears to be associated with oxidative stress and protein turnover.

The protein localises to the plastid. It is found in the chloroplast. The catalysed reaction is 2 (2R)-3-phosphoglycerate + 2 H(+) = D-ribulose 1,5-bisphosphate + CO2 + H2O. It carries out the reaction D-ribulose 1,5-bisphosphate + O2 = 2-phosphoglycolate + (2R)-3-phosphoglycerate + 2 H(+). Its function is as follows. RuBisCO catalyzes two reactions: the carboxylation of D-ribulose 1,5-bisphosphate, the primary event in carbon dioxide fixation, as well as the oxidative fragmentation of the pentose substrate in the photorespiration process. Both reactions occur simultaneously and in competition at the same active site. This Cryptomeria japonica (Japanese cedar) protein is Ribulose bisphosphate carboxylase large chain.